A 454-amino-acid chain; its full sequence is Probable succinate-semialdehyde dehydrogenase [NADP(+)] (454 aa).

Residues 130 to 131, 154 to 157, and 206 to 207 contribute to the NADP(+) site; these read WN, KHAS, and GS. The active-site Proton acceptor is the E228. L229 is a binding site for NADP(+). Residue C262 is the Nucleophile of the active site. E359 contributes to the NADP(+) binding site.

It belongs to the aldehyde dehydrogenase family.

It carries out the reaction succinate semialdehyde + NADP(+) + H2O = succinate + NADPH + 2 H(+). It functions in the pathway amino-acid degradation; 4-aminobutanoate degradation. Functionally, catalyzes the NADP(+) dependent oxidation of succinate semialdehyde to succinate. The protein is Probable succinate-semialdehyde dehydrogenase [NADP(+)] (gabD) of Synechocystis sp. (strain ATCC 27184 / PCC 6803 / Kazusa).